The chain runs to 762 residues: PHD finger protein 20-like protein 1 (762 aa).

2 Tudor domains span residues 11–71 (ITFE…LERP) and 85–141 (VDFK…EDAK). Disordered stretches follow at residues 178 to 231 (AKNK…TSSD), 289 to 359 (AEKK…CIKP), 383 to 411 (SVIN…RSQR), 536 to 559 (SLKL…EGTE), and 613 to 651 (LSGK…QHDY). Basic and acidic residues predominate over residues 193–211 (NKDKEERKWLKVPSKKEET). 2 stretches are compositionally biased toward polar residues: residues 319–340 (DISS…SSGK) and 383–398 (SVIN…NSPR). A compositionally biased stretch (basic residues) spans 399 to 410 (SYKHSQRRRRSQ). The segment covering 614–632 (SGKKKEKEKEKKEKKEKDH) has biased composition (basic and acidic residues). Residues 633–647 (KSKQKKKKKKKKKSK) show a composition bias toward basic residues.

It localises to the nucleus. Its function is as follows. Is a negative regulator of proteasomal degradation of methylated proteins. Involved in the maintainance of pluripotency of embryonic stem cells. The chain is PHD finger protein 20-like protein 1 (PHF20L1) from Gallus gallus (Chicken).